Here is a 452-residue protein sequence, read N- to C-terminus: Putative purine permease CPE0397 (452 aa).

The next 12 membrane-spanning stretches (helical) occupy residues 34–54, 58–78, 83–103, 108–128, 138–158, 172–192, 201–221, 250–270, 326–346, 348–368, 383–403, and 412–432; these read IFAAFGGIIVVPLVIATSLGF, VTTALISASILGSGLATIIQA, KVGARVACIMGTDFTFVSPAI, VLGLPGIIGATILGSLFEVIL, FFPPLVTGTVVALIGLTLLPV, YASLENLAVAMFVLVITLLLN, SASILIGIVVGYIVCIPLGLV, MAFIPAYFVATIGTVGCLKAI, AVMAGILLVILGFLPKVAAII, GIPNPVLGGVGIMMFGTVAAA, LLIIAISMGLGLGVTFRPDVI, and MIFSSGISTGTIAALILNAVL.

The protein belongs to the nucleobase:cation symporter-2 (NCS2) (TC 2.A.40) family.

Its subcellular location is the cell membrane. This chain is Putative purine permease CPE0397 (cpx), found in Clostridium perfringens (strain 13 / Type A).